Consider the following 365-residue polypeptide: Phospho-N-acetylmuramoyl-pentapeptide-transferase (365 aa).

Transmembrane regions (helical) follow at residues 19–39, 49–69, 92–112, 116–136, 156–176, 183–203, 215–235, 238–258, 279–299, and 345–365; these read TLLILLWALALALMALLSSWA, LLIALGFTALVTALIGMAVVP, AGTPTMGGIFFVPVAVAIAVV, FNPDVIVVGLVTLGYMAIGWV, LFLQVAIAVIFCTWLFFYGPT, IMQFVLPLGFLFWLVATFALV, VDGLAAGTGAIAFVGLGLLVA, NPALAFFCCAMAGGCIGFVHH, LAAVGIMTGNLWGLLLISGIF, and QIVGSFYLINTLLAIVAMATA.

The protein belongs to the glycosyltransferase 4 family. MraY subfamily. The cofactor is Mg(2+).

The protein localises to the cell inner membrane. The catalysed reaction is UDP-N-acetyl-alpha-D-muramoyl-L-alanyl-gamma-D-glutamyl-meso-2,6-diaminopimeloyl-D-alanyl-D-alanine + di-trans,octa-cis-undecaprenyl phosphate = di-trans,octa-cis-undecaprenyl diphospho-N-acetyl-alpha-D-muramoyl-L-alanyl-D-glutamyl-meso-2,6-diaminopimeloyl-D-alanyl-D-alanine + UMP. It functions in the pathway cell wall biogenesis; peptidoglycan biosynthesis. In terms of biological role, catalyzes the initial step of the lipid cycle reactions in the biosynthesis of the cell wall peptidoglycan: transfers peptidoglycan precursor phospho-MurNAc-pentapeptide from UDP-MurNAc-pentapeptide onto the lipid carrier undecaprenyl phosphate, yielding undecaprenyl-pyrophosphoryl-MurNAc-pentapeptide, known as lipid I. This is Phospho-N-acetylmuramoyl-pentapeptide-transferase from Synechocystis sp. (strain ATCC 27184 / PCC 6803 / Kazusa).